We begin with the raw amino-acid sequence, 112 residues long: uncharacterized protein (112 aa).

Helical transmembrane passes span 33–53 (PSPL…PFGA), 58–78 (LYIY…NVCT), and 91–111 (CVYV…LLFV).

It is found in the membrane. This is an uncharacterized protein from Saccharomyces cerevisiae (strain ATCC 204508 / S288c) (Baker's yeast).